The sequence spans 935 residues: Progesterone receptor (935 aa).

Residues 1–164 form an AF3; mediates transcriptional activation region; that stretch reads MTELKAKGPR…PATQRVLSPL (164 aa). Residues 1–256 form a disordered region; it reads MTELKAKGPR…AAAGGGAAAV (256 aa). Residues 1–568 are modulating, Pro-Rich; it reads MTELKAKGPR…YSFESLPQKI (568 aa). Phosphoserine is present on serine 20. An LXXL motif 1 motif is present at residues 55–59; the sequence is LDGLL. A Phosphoserine modification is found at serine 81. Residues 115 to 119 carry the LXXL motif 2 motif; sequence LDTLL. Serine 130 and serine 162 each carry phosphoserine. The segment at 165 to 305 is mediates transcriptional transrepression; it reads MSRSGGKAGD…LATTTMDFTH (141 aa). The Nuclear localization signal motif lies at 183–187; it reads KVLPR. Phosphoserine occurs at positions 190 and 213. Acidic residues predominate over residues 220–231; sequence EVEEEDGSESED. The segment covering 232-246 has biased composition (low complexity); sequence SAGPLLKGKPRALGG. Serine 294 is modified (phosphoserine; by MAPK1). Residues 328-353 are disordered; it reads SYDGGAGAASAFAPPRSSPSASSTPV. Residues 335–350 show a composition bias toward low complexity; that stretch reads AASAFAPPRSSPSASS. A Phosphoserine; by MAPK modification is found at serine 345. Lysine 388 participates in a covalent cross-link: Glycyl lysine isopeptide (Lys-Gly) (interchain with G-Cter in SUMO); alternate. Lysine 388 participates in a covalent cross-link: Glycyl lysine isopeptide (Lys-Gly) (interchain with G-Cter in ubiquitin); alternate. Position 400 is a phosphoserine; by CDK2 (serine 400). The tract at residues 415-452 is disordered; it reads PDFPLGPPPPLPPRAPPSRPGEAAVTAAPAGASVSSAS. Pro residues predominate over residues 418 to 433; it reads PLGPPPPLPPRAPPSR. Over residues 434–452 the composition is skewed to low complexity; sequence PGEAAVTAAPAGASVSSAS. The AF1; mediates transcriptional activation stretch occupies residues 456-548; it reads STLECILYKA…VYPPYLNYLR (93 aa). Residue lysine 533 forms a Glycyl lysine isopeptide (Lys-Gly) (interchain with G-Cter in SUMO) linkage. 2 consecutive NR C4-type zinc fingers follow at residues 569 to 589 and 605 to 629; these read CLIC…CGSC and CAGR…LRKC. The nuclear receptor DNA-binding region spans 569 to 641; sequence CLICGDEASG…AGMVLGGRKF (73 aa). Serine 678 carries the phosphoserine modification. An NR LBD domain is found at 681–915; it reads QDIQLIPPLI…EFPEMMSEVI (235 aa). The tract at residues 689–935 is AF2; mediates transcriptional activation; sequence LINLLVSIEP…MVKPLLFHKK (247 aa). Position 768 (arginine 768) interacts with progesterone.

It belongs to the nuclear hormone receptor family. In terms of assembly, interacts with SMARD1 and UNC45A. Interacts with CUEDC2; the interaction promotes ubiquitination, decreases sumoylation, and represses transcriptional activity. Interacts with PIAS3; the interaction promotes sumoylation of PR in a hormone-dependent manner, inhibits DNA-binding, and alters nuclear export. Interacts with SP1; the interaction requires ligand-induced phosphorylation on Ser-345 by ERK1/2-MAPK. Interacts with PRMT2. Interacts with NCOA2 and NCOA1. Interacts with KLF9. Interacts with GTF2B. In terms of processing, phosphorylated on multiple serine sites. Several of these sites are hormone-dependent. Phosphorylation on Ser-294 is highly hormone-dependent and modulates ubiquitination and sumoylation on Lys-388. Phosphorylation on Ser-345 also requires induction by hormone. Basal phosphorylation on Ser-81, Ser-162, Ser-190 and Ser-400 is increased in response to progesterone and can be phosphorylated in vitro by the CDK2-A1 complex. Increased levels of phosphorylation on Ser-400 also in the presence of EGF, heregulin, IGF, PMA and FBS. Phosphorylation at this site by CDK2 is ligand-independent, and increases nuclear translocation and transcriptional activity. Phosphorylation at Ser-162 and Ser-294, but not at Ser-190, is impaired during the G(2)/M phase of the cell cycle. Phosphorylation on Ser-345 by ERK1/2 MAPK is required for interaction with SP1. Post-translationally, sumoylation is hormone-dependent and represses transcriptional activity. Sumoylation on all three sites is enhanced by PIAS3. Desumoylated by SENP1. Sumoylation on Lys-388, the main site of sumoylation, is repressed by ubiquitination on the same site, and modulated by phosphorylation at Ser-294. Ubiquitination is hormone-dependent and represses sumoylation on the same site. Promoted by MAPK-mediated phosphorylation on Ser-294. Ubiquitinated by UBR5, leading to its degradation: UBR5 specifically recognizes and binds ligand-bound PGR when it is not associated with coactivators (NCOAs). In presence of NCOAs, the UBR5-degron is not accessible, preventing its ubiquitination and degradation. In terms of processing, palmitoylated by ZDHHC7 and ZDHHC21. Palmitoylation is required for plasma membrane targeting and for rapid intracellular signaling via ERK and AKT kinases and cAMP generation.

Its subcellular location is the nucleus. It is found in the cytoplasm. Its function is as follows. The steroid hormones and their receptors are involved in the regulation of eukaryotic gene expression and affect cellular proliferation and differentiation in target tissues. Transcriptional activator of several progesteron-dependent promoters in a variety of cell types. Involved in activation of SRC-dependent MAPK signaling on hormone stimulation. The polypeptide is Progesterone receptor (PGR) (Macaca sylvanus (Barbary macaque)).